A 388-amino-acid chain; its full sequence is Regulator of G-protein signaling 20 (388 aa).

The disordered stretch occupies residues 138 to 199 (PGRPSGGRPL…TPGAAPGQPG (62 aa)). Over residues 185-197 (PAAQDTPGAAPGQ) the composition is skewed to low complexity. Residues 262 to 378 (SFDKLMVTPA…MNSAVYKDLL (117 aa)) form the RGS domain.

In terms of assembly, forms a complex with G(alpha)z/i2 subunits and mu-opioid receptors; the formation of this complex results in mu-opioid receptor desensitization. Interacts with OPRM1. Fatty acylated. Heavily palmitoylated in the cysteine string motif. In terms of processing, N- and O-glycosylated in synapsomal membranes. Post-translationally, serine phosphorylated in synapsomal membranes. Sumoylated with SUMO1 and SUMO2 in synaptosomes. The sumoylated forms act as a scaffold for sequestering mu-opioid receptor-activated G(alpha) subunits. Isoform 5 is expressed in brain at high levels in the caudate nucleus and temporal lobe.

The protein resides in the membrane. It localises to the nucleus. The protein localises to the cytoplasm. Its function is as follows. Inhibits signal transduction by increasing the GTPase activity of G protein alpha subunits thereby driving them into their inactive GDP-bound form. Binds selectively to G(z)-alpha and G(alpha)-i2 subunits, accelerates their GTPase activity and regulates their signaling activities. The G(z)-alpha activity is inhibited by the phosphorylation and palmitoylation of the G-protein. Negatively regulates mu-opioid receptor-mediated activation of the G-proteins. This is Regulator of G-protein signaling 20 (RGS20) from Homo sapiens (Human).